A 146-amino-acid polypeptide reads, in one-letter code: Snaclec 4 (146 aa).

The N-terminal stretch at Met1 to Ala23 is a signal peptide. 3 cysteine pairs are disulfide-bonded: Cys27–Cys38, Cys55–Cys144, and Cys121–Cys136. Residues Tyr34–Lys145 form the C-type lectin domain.

This sequence belongs to the snaclec family. As to quaternary structure, heterodimer; disulfide-linked.

It is found in the secreted. Interferes with one step of hemostasis (modulation of platelet aggregation, or coagulation cascade, for example). The sequence is that of Snaclec 4 from Daboia siamensis (Eastern Russel's viper).